The primary structure comprises 360 residues: Phenylalanine--tRNA ligase alpha subunit (360 aa).

Glu260 contributes to the Mg(2+) binding site.

The protein belongs to the class-II aminoacyl-tRNA synthetase family. Phe-tRNA synthetase alpha subunit type 1 subfamily. As to quaternary structure, tetramer of two alpha and two beta subunits. The cofactor is Mg(2+).

It localises to the cytoplasm. It carries out the reaction tRNA(Phe) + L-phenylalanine + ATP = L-phenylalanyl-tRNA(Phe) + AMP + diphosphate + H(+). The polypeptide is Phenylalanine--tRNA ligase alpha subunit (Rhizobium johnstonii (strain DSM 114642 / LMG 32736 / 3841) (Rhizobium leguminosarum bv. viciae)).